Reading from the N-terminus, the 153-residue chain is 6,7-dimethyl-8-ribityllumazine synthase (153 aa).

Residues Phe-22, 56–58 (AFE), and 80–82 (TVI) each bind 5-amino-6-(D-ribitylamino)uracil. Residue 85–86 (ST) coordinates (2S)-2-hydroxy-3-oxobutyl phosphate. His-88 functions as the Proton donor in the catalytic mechanism. Phe-113 contributes to the 5-amino-6-(D-ribitylamino)uracil binding site. A (2S)-2-hydroxy-3-oxobutyl phosphate-binding site is contributed by Arg-127.

The protein belongs to the DMRL synthase family. In terms of assembly, forms an icosahedral capsid composed of 60 subunits, arranged as a dodecamer of pentamers.

It carries out the reaction (2S)-2-hydroxy-3-oxobutyl phosphate + 5-amino-6-(D-ribitylamino)uracil = 6,7-dimethyl-8-(1-D-ribityl)lumazine + phosphate + 2 H2O + H(+). The protein operates within cofactor biosynthesis; riboflavin biosynthesis; riboflavin from 2-hydroxy-3-oxobutyl phosphate and 5-amino-6-(D-ribitylamino)uracil: step 1/2. Its function is as follows. Catalyzes the formation of 6,7-dimethyl-8-ribityllumazine by condensation of 5-amino-6-(D-ribitylamino)uracil with 3,4-dihydroxy-2-butanone 4-phosphate. This is the penultimate step in the biosynthesis of riboflavin. The chain is 6,7-dimethyl-8-ribityllumazine synthase from Actinobacillus pleuropneumoniae serotype 7 (strain AP76).